We begin with the raw amino-acid sequence, 278 residues long: Small ribosomal subunit protein uS2 (278 aa).

The tract at residues 235–278 (AEAAEEAPKRERKAKAAVKKERTKKEDDDALNANVAGKFAKDEE) is disordered. Over residues 252-261 (VKKERTKKED) the composition is skewed to basic and acidic residues.

It belongs to the universal ribosomal protein uS2 family.

The protein is Small ribosomal subunit protein uS2 of Parabacteroides distasonis (strain ATCC 8503 / DSM 20701 / CIP 104284 / JCM 5825 / NCTC 11152).